We begin with the raw amino-acid sequence, 152 residues long: Putative aluminum-activated malate transporter 11 (152 aa).

The next 2 membrane-spanning stretches (helical) occupy residues 48-68 (VIHA…YFME) and 78-98 (AIWA…VEGL).

The protein belongs to the aromatic acid exporter (TC 2.A.85) family.

The protein resides in the membrane. Its function is as follows. Malate transporter. In Arabidopsis thaliana (Mouse-ear cress), this protein is Putative aluminum-activated malate transporter 11 (ALMT11).